The chain runs to 517 residues: Quinol oxidase subunit 1 (517 aa).

12 helical membrane-spanning segments follow: residues valine 19–methionine 39, isoleucine 64–phenylalanine 84, glutamine 98–proline 118, methionine 150–isoleucine 170, isoleucine 185–alanine 205, tryptophan 226–phenylalanine 246, isoleucine 271–leucine 291, threonine 303–threonine 323, valine 333–valine 353, valine 369–phenylalanine 389, isoleucine 412–glycine 432, and isoleucine 460–alanine 480. A Fe(II)-heme a-binding site is contributed by histidine 65. Residues histidine 235, tyrosine 239, histidine 284, and histidine 285 each coordinate Cu cation. Residues histidine 235–tyrosine 239 constitute a cross-link (1'-histidyl-3'-tyrosine (His-Tyr)). Histidine 372 contributes to the heme a3 binding site. Histidine 374 contributes to the Fe(II)-heme a binding site.

The protein belongs to the heme-copper respiratory oxidase family.

It localises to the cell membrane. The catalysed reaction is 2 a quinol + O2 = 2 a quinone + 2 H2O. Catalyzes the reduction of oxygen to water. In terms of biological role, subunits I, II and III form the functional core of the enzyme complex. Electrons originating in caldariella quinol are transferred to the binuclear center formed by heme A3 and Cu(B). Its function is as follows. Subunit I binds heme a and the bimetallic center. The sequence is that of Quinol oxidase subunit 1 (soxB) from Sulfolobus acidocaldarius (strain ATCC 33909 / DSM 639 / JCM 8929 / NBRC 15157 / NCIMB 11770).